A 229-amino-acid chain; its full sequence is Secretory carrier-associated membrane protein 4 (229 aa).

Over Met1–Arg39 the chain is Cytoplasmic. Helical transmembrane passes span Ile40–Ala60, Trp61–Phe81, Phe105–Gly125, and Val149–Ile169. At Met170–Pro229 the chain is on the cytoplasmic side. A Phosphothreonine modification is found at Thr194. Positions Phe208–Pro229 are disordered.

The protein belongs to the SCAMP family.

It is found in the membrane. In terms of biological role, probably involved in membrane protein trafficking. The protein is Secretory carrier-associated membrane protein 4 (SCAMP4) of Homo sapiens (Human).